Consider the following 182-residue polypeptide: Putative manganese efflux pump MntP (182 aa).

A run of 6 helical transmembrane segments spans residues 6–26, 37–57, 71–91, 101–121, 131–151, and 162–182; these read LIPL…VSLG, ILYI…IGMV, HFAG…SSIL, IGIS…SVGL, IITI…GLFI, and YGEI…LFPI.

It belongs to the MntP (TC 9.B.29) family.

The protein localises to the cell membrane. Probably functions as a manganese efflux pump. The chain is Putative manganese efflux pump MntP from Bacillus cereus (strain ATCC 10987 / NRS 248).